Consider the following 259-residue polypeptide: 5'-nucleotidase SurE (259 aa).

Asp8, Asp9, Ser39, and Asn93 together coordinate a divalent metal cation.

This sequence belongs to the SurE nucleotidase family. A divalent metal cation serves as cofactor.

Its subcellular location is the cytoplasm. The catalysed reaction is a ribonucleoside 5'-phosphate + H2O = a ribonucleoside + phosphate. Nucleotidase that shows phosphatase activity on nucleoside 5'-monophosphates. In Thermococcus kodakarensis (strain ATCC BAA-918 / JCM 12380 / KOD1) (Pyrococcus kodakaraensis (strain KOD1)), this protein is 5'-nucleotidase SurE.